A 195-amino-acid polypeptide reads, in one-letter code: Acireductone dioxygenase 2 (195 aa).

Fe(2+) is bound by residues His-94, His-96, Glu-100, and His-139. Residues His-94, His-96, Glu-100, and His-139 each coordinate Ni(2+).

Belongs to the acireductone dioxygenase (ARD) family. It depends on Fe(2+) as a cofactor. The cofactor is Ni(2+).

It is found in the cytoplasm. It localises to the nucleus. The enzyme catalyses 1,2-dihydroxy-5-(methylsulfanyl)pent-1-en-3-one + O2 = 4-methylsulfanyl-2-oxobutanoate + formate + 2 H(+). It carries out the reaction 1,2-dihydroxy-5-(methylsulfanyl)pent-1-en-3-one + O2 = 3-(methylsulfanyl)propanoate + CO + formate + 2 H(+). Its pathway is amino-acid biosynthesis; L-methionine biosynthesis via salvage pathway; L-methionine from S-methyl-5-thio-alpha-D-ribose 1-phosphate: step 5/6. Its function is as follows. Catalyzes 2 different reactions between oxygen and the acireductone 1,2-dihydroxy-3-keto-5-methylthiopentene (DHK-MTPene) depending upon the metal bound in the active site. Fe-containing acireductone dioxygenase (Fe-ARD) produces formate and 2-keto-4-methylthiobutyrate (KMTB), the alpha-ketoacid precursor of methionine in the methionine recycle pathway. Ni-containing acireductone dioxygenase (Ni-ARD) produces methylthiopropionate, carbon monoxide and formate, and does not lie on the methionine recycle pathway. This chain is Acireductone dioxygenase 2, found in Physcomitrium patens (Spreading-leaved earth moss).